A 317-amino-acid chain; its full sequence is Melanocyte-stimulating hormone receptor (317 aa).

At 1 to 37 (MPMQGAQRKLLGSLNSTPTATSNLGLAANHTGAPCLE) the chain is on the extracellular side. Residue Asn-29 is glycosylated (N-linked (GlcNAc...) asparagine). Residues 38-63 (VSIPDGLFLSLGLVSLVENVLVVAAV) form a helical membrane-spanning segment. Residues 64-72 (AKNRNLHSS) lie on the Cytoplasmic side of the membrane. A helical transmembrane segment spans residues 73–93 (MYCFICCLALSDLLVSGSNML). The Extracellular portion of the chain corresponds to 94–118 (ETAVILLLETGALATRTSVVQQLHN). The chain crosses the membrane as a helical span at residues 119–140 (TINVLTCSSMLCSLCFLGAIAV). Residues 141-163 (DRYISIFYALRYHSIMTLPRAQR) lie on the Cytoplasmic side of the membrane. The chain crosses the membrane as a helical span at residues 164–183 (AIAAIWVASVLSSTLFITYY). The Extracellular segment spans residues 184-191 (DHAAVLLC). Residues 192-211 (LVVFFLAMLVLMAVLYVHML) form a helical membrane-spanning segment. Topologically, residues 212–240 (ARACQHAHGIIRLHKRQTPAHQGFGLRGA) are cytoplasmic. The chain crosses the membrane as a helical span at residues 241-266 (ATLTILLGIFFLCWGPFFLHLTLVVF). At 267 to 279 (CPQHLTCSCIFKN) the chain is on the extracellular side. Residues 280 to 300 (FKVFLTLIICNTIIDPLIYAF) traverse the membrane as a helical segment. The Cytoplasmic portion of the chain corresponds to 301-317 (RSQELRRTLKEVLLCSW). A lipid anchor (S-palmitoyl cysteine) is attached at Cys-315.

This sequence belongs to the G-protein coupled receptor 1 family. As to quaternary structure, interacts with MGRN1, but does not undergo MGRN1-mediated ubiquitination; this interaction competes with GNAS-binding and thus inhibits agonist-induced cAMP production. Interacts with OPN3; the interaction results in a decrease in MC1R-mediated cAMP signaling and ultimately a decrease in melanin production in melanocytes.

The protein localises to the cell membrane. Its function is as follows. Receptor for MSH (alpha, beta and gamma) and ACTH. The activity of this receptor is mediated by G proteins which activate adenylate cyclase. Mediates melanogenesis, the production of eumelanin (black/brown) and phaeomelanin (red/yellow), via regulation of cAMP signaling in melanocytes. The protein is Melanocyte-stimulating hormone receptor (MC1R) of Saguinus oedipus (Cotton-top tamarin).